A 653-amino-acid chain; its full sequence is Cytidine monophosphate-N-acetylneuraminic acid hydroxylase (653 aa).

The region spanning 11–120 is the Rieske domain; the sequence is LSPEETSELK…PEYNEDGSLD (110 aa). Residues Cys62, His64, Cys83, and His86 each contribute to the [2Fe-2S] cluster site. The tract at residues 596–622 is disordered; the sequence is WNPSQATPAVEAKDPSSDSKDSATKPG. The segment covering 606 to 618 has biased composition (basic and acidic residues); that stretch reads EAKDPSSDSKDSA. The helical transmembrane segment at 630 to 647 threads the bilayer; the sequence is LLRPLGIVVALVGVGVAI.

It belongs to the CMP-Neu5Ac hydroxylase family. Requires [2Fe-2S] cluster as cofactor.

Its subcellular location is the membrane. The enzyme catalyses CMP-N-acetyl-beta-neuraminate + 2 Fe(II)-[cytochrome b5] + O2 + 2 H(+) = CMP-N-glycoloyl-beta-neuraminate + 2 Fe(III)-[cytochrome b5] + H2O. It participates in amino-sugar metabolism; N-acetylneuraminate metabolism. Its function is as follows. Sialic acids are components of carbohydrate chains of glycoconjugates and are involved in cell-cell recognition and cell-pathogen interactions. Catalyzes the conversion of CMP-N-acetylneuraminic acid (CMP-Neu5Ac) into its hydroxylated derivative CMP-N-glycolylneuraminic acid (CMP-Neu5Gc), a sialic acid abundantly expressed at the surface of many cells. The polypeptide is Cytidine monophosphate-N-acetylneuraminic acid hydroxylase (cnh) (Asterias rubens (Common European starfish)).